The following is an 83-amino-acid chain: Translational regulator CsrA (83 aa).

Belongs to the CsrA/RsmA family. As to quaternary structure, homodimer; the beta-strands of each monomer intercalate to form a hydrophobic core, while the alpha-helices form wings that extend away from the core.

It is found in the cytoplasm. Functionally, a translational regulator that binds mRNA to regulate translation initiation and/or mRNA stability. Usually binds in the 5'-UTR at or near the Shine-Dalgarno sequence preventing ribosome-binding, thus repressing translation. Its main target seems to be the major flagellin gene, while its function is anatagonized by FliW. The sequence is that of Translational regulator CsrA from Nocardioides sp. (strain ATCC BAA-499 / JS614).